Reading from the N-terminus, the 138-residue chain is Glutaredoxin-like protein C5orf63 (138 aa).

The cysteines at positions 41 and 44 are disulfide-linked. The span at 55–64 shows a compositional bias: basic and acidic residues; it reads ENRQPYKDQK. The interval 55–88 is disordered; it reads ENRQPYKDQKLPGTRRRRSPSSPSHPHMASQSGK.

It belongs to the glutaredoxin family. YDR286C subfamily.

The protein is Glutaredoxin-like protein C5orf63 (C5orf63) of Homo sapiens (Human).